Here is a 307-residue protein sequence, read N- to C-terminus: Protease HtpX homolog (307 aa).

A run of 2 helical transmembrane segments spans residues 10 to 30 and 40 to 60; these read VITI…AYGL and ISII…QWLV. His-144 contacts Zn(2+). The active site involves Glu-145. His-148 serves as a coordination point for Zn(2+). Helical transmembrane passes span 156–176 and 187–207; these read LLLA…SMIF and FFLV…MILG. Glu-213 contributes to the Zn(2+) binding site.

The protein belongs to the peptidase M48B family. It depends on Zn(2+) as a cofactor.

The protein resides in the cell membrane. This chain is Protease HtpX homolog, found in Picrophilus torridus (strain ATCC 700027 / DSM 9790 / JCM 10055 / NBRC 100828 / KAW 2/3).